Consider the following 375-residue polypeptide: Filamin-binding LIM protein 1 (375 aa).

The tract at residues 1 to 70 (MASKPEKRVA…SPWTPPGRAA (70 aa)) is filamin-binding. 2 disordered regions span residues 43-119 (WEAP…PSEE) and 137-176 (HLSP…AERV). Composition is skewed to pro residues over residues 104-114 (FPPPPPPPPVL) and 140-149 (PPLPPPPPQA). Residues 150–159 (PAERPSVQPS) are compositionally biased toward low complexity. 3 consecutive LIM zinc-binding domains span residues 183–244 (DICA…TLER), 245–302 (CGKC…RKFA), and 303–372 (PVCS…RSAA). An FERMT2-binding region spans residues 278–375 (IGDESFALGS…HVKRSAAGCC (98 aa)).

In terms of assembly, interacts with FERMT2, FLNA, FLNB and FLNC. Interacts with NKX2-5.

The protein localises to the cell junction. The protein resides in the focal adhesion. It is found in the cytoplasm. Its subcellular location is the cytoskeleton. It localises to the stress fiber. Serves as an anchoring site for cell-ECM adhesion proteins and filamin-containing actin filaments. Is implicated in cell shape modulation (spreading) and motility. May participate in the regulation of filamin-mediated cross-linking and stabilization of actin filaments. May also regulate the assembly of filamin-containing signaling complexes that control actin assembly. Promotes dissociation of FLNA from ITGB3 and ITGB7. Promotes activation of integrins and regulates integrin-mediated cell-cell adhesion. This chain is Filamin-binding LIM protein 1 (FBLIM1), found in Pongo abelii (Sumatran orangutan).